The following is a 599-amino-acid chain: Kelch repeat and BTB domain-containing protein 8 (599 aa).

The disordered stretch occupies residues 1 to 25 (MAASADLSKSSPTPNGIPSSDTAND). Residues 7–25 (LSKSSPTPNGIPSSDTAND) show a composition bias toward polar residues. The BTB domain maps to 49 to 117 (TDIVVEVDHG…AYTSRVILTE (69 aa)). The BACK domain occupies 152-254 (SIGVFIFADH…MEDTFIEKIP (103 aa)). Kelch repeat units follow at residues 334-388 (DIYI…YCCG), 389-439 (KMYA…EHKE), 441-479 (IYVL…VYKD), 481-530 (IYYI…LFQN), and 540-586 (QVTV…FECA).

It belongs to the KBTBD8 family. Component of the BCR(KBTBD8) E3 ubiquitin ligase complex, at least composed of CUL3, KBTBD8 and RBX1.

It is found in the cytoplasm. The protein localises to the cytoskeleton. Its subcellular location is the spindle. It localises to the golgi apparatus. Its function is as follows. Substrate-specific adapter of a BCR (BTB-CUL3-RBX1) E3 ubiquitin ligase complex that acts as a regulator of neural crest specification. The BCR(KBTBD8) complex acts by mediating monoubiquitination of NOLC1 and TCOF1: monoubiquitination promotes the formation of a NOLC1-TCOF1 complex that acts as a platform to connect RNA polymerase I with enzymes responsible for ribosomal processing and modification, leading to remodel the translational program of differentiating cells in favor of neural crest specification. The sequence is that of Kelch repeat and BTB domain-containing protein 8 (Kbtbd8) from Mus musculus (Mouse).